Consider the following 384-residue polypeptide: UDP-4-amino-4-deoxy-L-arabinose--oxoglutarate aminotransferase (384 aa).

K182 bears the N6-(pyridoxal phosphate)lysine mark.

The protein belongs to the DegT/DnrJ/EryC1 family. ArnB subfamily. In terms of assembly, homodimer. The cofactor is pyridoxal 5'-phosphate.

The enzyme catalyses UDP-4-amino-4-deoxy-beta-L-arabinose + 2-oxoglutarate = UDP-beta-L-threo-pentopyranos-4-ulose + L-glutamate. Its pathway is nucleotide-sugar biosynthesis; UDP-4-deoxy-4-formamido-beta-L-arabinose biosynthesis; UDP-4-deoxy-4-formamido-beta-L-arabinose from UDP-alpha-D-glucuronate: step 2/3. It participates in bacterial outer membrane biogenesis; lipopolysaccharide biosynthesis. In terms of biological role, catalyzes the conversion of UDP-4-keto-arabinose (UDP-Ara4O) to UDP-4-amino-4-deoxy-L-arabinose (UDP-L-Ara4N). The modified arabinose is attached to lipid A and is required for resistance to polymyxin and cationic antimicrobial peptides. The protein is UDP-4-amino-4-deoxy-L-arabinose--oxoglutarate aminotransferase of Yersinia pseudotuberculosis serotype O:1b (strain IP 31758).